Consider the following 805-residue polypeptide: Ubiquitin carboxyl-terminal hydrolase 10-B (805 aa).

Disordered stretches follow at residues 136–173 (AIPD…YLEG) and 284–305 (DTTE…EDTV). Composition is skewed to polar residues over residues 143–153 (NADSDGTSGTG) and 284–298 (DTTE…QTLE). The USP domain maps to 422 to 802 (RGLINKGNWC…TAYLLYYRRV (381 aa)). C431 functions as the Nucleophile in the catalytic mechanism. The segment at 573–600 (EEVNKEEQEGSDEEWEQVGPRNKSSVTR) is disordered. H756 serves as the catalytic Proton acceptor.

Belongs to the peptidase C19 family. USP10 subfamily.

The protein localises to the cytoplasm. It localises to the nucleus. It catalyses the reaction Thiol-dependent hydrolysis of ester, thioester, amide, peptide and isopeptide bonds formed by the C-terminal Gly of ubiquitin (a 76-residue protein attached to proteins as an intracellular targeting signal).. Functionally, hydrolase that can remove conjugated ubiquitin from target proteins such as p53/tp53, rps2/us5, rps3/us3, rps10/eS10, becn1, snx3 and cftr. Acts as an essential regulator of p53/tp53 stability: in unstressed cells, specifically deubiquitinates p53/tp53 in the cytoplasm, leading to counteracts MDM2 action and stabilize p53/tp53. Following DNA damage, translocates to the nucleus and deubiquitinates p53/tp53, leading to regulate the p53/TP53-dependent DNA damage response. Component of a regulatory loop that controls autophagy and p53/tp53 levels. Plays a key role in 40S ribosome subunit recycling when a ribosome has stalled during translation: acts both by inhibiting formation of stress granules, which store stalled translation pre-initiation complexes, and mediating deubiquitination of 40S ribosome subunits. Deubiquitinates cftr in early endosomes, enhancing its endocytic recycling. This is Ubiquitin carboxyl-terminal hydrolase 10-B (usp10-b) from Xenopus laevis (African clawed frog).